Reading from the N-terminus, the 614-residue chain is Zinc metalloproteinase-disintegrin-like protein F1 (614 aa).

An N-terminal signal peptide occupies residues 1 to 20 (MLQVLLVTICLAVFPYQGSS). Positions 21–192 (IILESGNVND…IKASQFILTP (172 aa)) are excised as a propeptide. The short motif at 167-173 (PKKCGVT) is the Cys-switch; controls maturation element. Glu-193 carries the post-translational modification Pyrrolidone carboxylic acid (Glu). Positions 202-398 (KYIKLAIVVD…HTPRCILNEP (197 aa)) constitute a Peptidase M12B domain. A glycan (N-linked (GlcNAc...) asparagine) is linked at Asn-221. 3 cysteine pairs are disulfide-bonded: Cys-313–Cys-393, Cys-353–Cys-377, and Cys-355–Cys-360. His-338 contributes to the Zn(2+) binding site. A Metal-binding motif is present at residues 338 to 349 (HELGHNLGINHD). Catalysis depends on Glu-339, which acts as the Proton acceptor. 2 residues coordinate Zn(2+): His-342 and His-348. The 87-residue stretch at 406–492 (PAVCGNYVVE…ECPMDHIQKN (87 aa)) folds into the Disintegrin domain. Positions 408, 411, 415, 418, and 421 each coordinate Ca(2+). 14 cysteine pairs are disulfide-bonded: Cys-409–Cys-438, Cys-420–Cys-433, Cys-422–Cys-428, Cys-432–Cys-455, Cys-446–Cys-452, Cys-451–Cys-477, Cys-464–Cys-484, Cys-471–Cys-503, Cys-496–Cys-508, Cys-515–Cys-565, Cys-530–Cys-575, Cys-543–Cys-553, Cys-560–Cys-601, and Cys-595–Cys-607. Residues 470–472 (ECD) carry the D/ECD-tripeptide motif. Ca(2+) contacts are provided by Asp-472, Glu-475, and Asp-487. An N-linked (GlcNAc...) asparagine glycan is attached at Asn-534.

It belongs to the venom metalloproteinase (M12B) family. P-III subfamily. P-IIIa sub-subfamily. Monomer. The cofactor is Zn(2+). N-glycosylated. Post-translationally, the N-terminus is blocked. Expressed by the venom gland (at protein level). Expressed by the venom gland.

It localises to the secreted. Its activity is regulated as follows. The alpha-fibrinogenase activity is inhibited by EDTA, but not by pefabloc. In terms of biological role, zinc metalloprotease that has fibrinogenolytic activity. Does not have hemorrhagic activity in rats. Cleaves insulin B chain at '38-Ala-|-Leu-39' and '40-Tyr-|-Leu-41' bonds. Hydrolyzes only partially and weakly isolated extracellular matrix (ECM) bovine fibronectin and basal membrane (BM) protein human collagen IV in vitro. Murine laminin is not hydrolyzed, neither isolated nor in a solubilized BM preparation. Nidogen is hydrolyzed at '350-Ser-|-Phe-351' bond in a solubilized BM preparation. Hydrolyzes plasma proteins involved in blood coagulation in vitro. Has alpha-fibrinogenase activity cleaving human fibrinogen alpha chain at '432-Lys-|-Leu-433' bond, but does not cleave beta or gamma chains. Does not cleave fibrin. Hydrolyzes only partially bovine prothrombin at '200-Ser-|-Gly-201' bond, factor X (FX) heavy chain, and very slowly, FX light chain and plasminogen in vitro, without activating any of them. Has no effect in plasma thrombin generation. Does not inhibit platelet aggregation induced by collagen in vitro. May have a delayed pathological action as an anticoagulant in envenomed patients after they received serotherapy as it is not recognized by the venom antiserum. This is Zinc metalloproteinase-disintegrin-like protein F1 from Vipera ammodytes ammodytes (Western sand viper).